Here is a 316-residue protein sequence, read N- to C-terminus: Protoheme IX farnesyltransferase (316 aa).

Positions methionine 1–threonine 21 are disordered. The span at proline 11–threonine 21 shows a compositional bias: polar residues. Helical transmembrane passes span valine 42–proline 62, valine 67–valine 87, valine 115–leucine 135, threonine 136–lysine 156, isoleucine 163–glycine 183, alanine 189–isoleucine 209, methionine 235–methionine 255, serine 256–leucine 276, and isoleucine 295–methionine 315.

This sequence belongs to the UbiA prenyltransferase family. Protoheme IX farnesyltransferase subfamily.

The protein resides in the cell inner membrane. The enzyme catalyses heme b + (2E,6E)-farnesyl diphosphate + H2O = Fe(II)-heme o + diphosphate. It functions in the pathway porphyrin-containing compound metabolism; heme O biosynthesis; heme O from protoheme: step 1/1. Converts heme B (protoheme IX) to heme O by substitution of the vinyl group on carbon 2 of heme B porphyrin ring with a hydroxyethyl farnesyl side group. In Photobacterium profundum (strain SS9), this protein is Protoheme IX farnesyltransferase.